A 154-amino-acid chain; its full sequence is Small ribosomal subunit protein uS9 (154 aa).

Disordered stretches follow at residues 1–33 (MVPP…SGLG) and 115–154 (PENN…YSKR). Over residues 135 to 154 (KERKKAGLKKARKAPQYSKR) the composition is skewed to basic residues.

Belongs to the universal ribosomal protein uS9 family.

The protein is Small ribosomal subunit protein uS9 of Tropheryma whipplei (strain TW08/27) (Whipple's bacillus).